Consider the following 187-residue polypeptide: Ribonuclease HII (187 aa).

The 187-residue stretch at 1–187 folds into the RNase H type-2 domain; the sequence is MIILGIDEAG…YKPVQVLLNE (187 aa). Residues aspartate 7, glutamate 8, and aspartate 99 each coordinate a divalent metal cation.

Belongs to the RNase HII family. It depends on Mn(2+) as a cofactor. Mg(2+) is required as a cofactor.

Its subcellular location is the cytoplasm. It carries out the reaction Endonucleolytic cleavage to 5'-phosphomonoester.. In terms of biological role, endonuclease that specifically degrades the RNA of RNA-DNA hybrids. The protein is Ribonuclease HII of Francisella tularensis subsp. holarctica (strain FTNF002-00 / FTA).